The chain runs to 342 residues: Polygalacturonase inhibitor 3 (342 aa).

A signal peptide spans 1-29; sequence MTQFNIPVTMSSSLSIILVILVSLRTALS. 2 disulfides stabilise this stretch: Cys-32–Cys-62 and Cys-63–Cys-72. N-linked (GlcNAc...) asparagine glycosylation occurs at Asn-64. LRR repeat units lie at residues 82–107, 108–132, 133–156, 157–180, 181–205, 206–228, 229–252, 253–275, 276–299, and 300–319; these read NNLD…LPYL, NFLY…LTQL, HYLY…IKTL, VTLD…LPNL, VGIT…SKLF, TSMT…NLNL, AFVD…DKNT, QKIH…SKNL, NGLD…LKFL, and HSLN…GGNL. N-linked (GlcNAc...) asparagine glycosylation occurs at Asn-141. A glycan (N-linked (GlcNAc...) asparagine) is linked at Asn-303. Cystine bridges form between Cys-310-Cys-332 and Cys-334-Cys-341.

The protein belongs to the polygalacturonase-inhibiting protein family. As to expression, found in suspension-cultured cells and to a lesser extent in hypocotyls, leaves and flowers.

The protein localises to the secreted. It is found in the cell wall. It localises to the membrane. Its function is as follows. Inhibitor of fungal polygalacturonase. It is an important factor for plant resistance to phytopathogenic fungi. The protein is Polygalacturonase inhibitor 3 (PGIP3) of Phaseolus vulgaris (Kidney bean).